The following is a 293-amino-acid chain: FAS1 domain-containing protein DEHA2G15708g (293 aa).

The N-terminal stretch at 1–18 is a signal peptide; sequence MKLSSILYVSVLAHLVMS. Residues 76 to 87 show a composition bias toward basic and acidic residues; the sequence is DHIGENEKREAK. A disordered region spans residues 76 to 126; that stretch reads DHIGENEKREAKNVYNLQSLKEGLDDENDKREGNVNKPEVSEEGSNKGDKR. The FAS1 domain occupies 141-290; the sequence is QNLLQSILPQ…GYIFVINDVL (150 aa).

It is found in the vacuole. The sequence is that of FAS1 domain-containing protein DEHA2G15708g from Debaryomyces hansenii (strain ATCC 36239 / CBS 767 / BCRC 21394 / JCM 1990 / NBRC 0083 / IGC 2968) (Yeast).